Reading from the N-terminus, the 458-residue chain is Lysine-rich nucleolar protein 1 (458 aa).

Positions 1-14 are enriched in basic and acidic residues; sequence MITKTHKVDLGLPE. Positions 1-21 are disordered; that stretch reads MITKTHKVDLGLPEKKKKKKV. Residue Lys-7 forms a Glycyl lysine isopeptide (Lys-Gly) (interchain with G-Cter in SUMO2) linkage. Residues Ser-42 and Ser-50 each carry the phosphoserine modification. The interval 46–305 is disordered; it reads ATSPSKSVAH…ESGVAGDPWK (260 aa). Positions 64–73 are enriched in basic residues; sequence VKKKKKKKKG. A Glycyl lysine isopeptide (Lys-Gly) (interchain with G-Cter in SUMO2) cross-link involves residue Lys-101. Ser-111 is modified (phosphoserine). Lys-130 participates in a covalent cross-link: Glycyl lysine isopeptide (Lys-Gly) (interchain with G-Cter in SUMO2). Ser-132 bears the Phosphoserine mark. Residues 145–155 show a composition bias toward basic residues; the sequence is GKKLKKHKKEK. The span at 173–192 shows a compositional bias: basic and acidic residues; the sequence is EAREARDVGDTCSVGKKDEE. Residues 198 to 218 are compositionally biased toward basic residues; the sequence is QKRKRKSPREHNGKVKKKKKI. Residue Lys-249 forms a Glycyl lysine isopeptide (Lys-Gly) (interchain with G-Cter in SUMO1); alternate linkage. A Glycyl lysine isopeptide (Lys-Gly) (interchain with G-Cter in SUMO2); alternate cross-link involves residue Lys-249. Phosphoserine is present on Ser-265. Over residues 265–274 the composition is skewed to basic residues; it reads SAKKKMKSKK. Glycyl lysine isopeptide (Lys-Gly) (interchain with G-Cter in SUMO2) cross-links involve residues Lys-275, Lys-287, and Lys-305. The segment at 306–458 is interaction with ZNF106; sequence EETDTDLEVV…NASKSVKLED (153 aa). 2 positions are modified to phosphothreonine: Thr-308 and Thr-310. Residues Lys-319, Lys-353, Lys-373, Lys-375, and Lys-407 each participate in a glycyl lysine isopeptide (Lys-Gly) (interchain with G-Cter in SUMO2) cross-link. Basic and acidic residues predominate over residues 336-353; that stretch reads QEEIDRESGKTEASETRK. A disordered region spans residues 336-355; sequence QEEIDRESGKTEASETRKWT. Arg-430 carries the post-translational modification Omega-N-methylarginine. Lys-442 is covalently cross-linked (Glycyl lysine isopeptide (Lys-Gly) (interchain with G-Cter in SUMO2)).

As to quaternary structure, interacts with ZNF106.

The protein resides in the nucleus. It localises to the nucleolus. In Homo sapiens (Human), this protein is Lysine-rich nucleolar protein 1 (KNOP1).